Consider the following 100-residue polypeptide: Internal protein II (100 aa).

Positions 1–10 (MKTYQEFIAE) are excised as a propeptide.

Internal protein II, which has a histone-like character, binds weakly to other components of the assembly core during an early stage of bacteriophage head morphogenesis. This chain is Internal protein II (ipi2), found in Enterobacteria phage T4 (Bacteriophage T4).